We begin with the raw amino-acid sequence, 82 residues long: Exodeoxyribonuclease 7 small subunit (82 aa).

Belongs to the XseB family. In terms of assembly, heterooligomer composed of large and small subunits.

It is found in the cytoplasm. It carries out the reaction Exonucleolytic cleavage in either 5'- to 3'- or 3'- to 5'-direction to yield nucleoside 5'-phosphates.. Functionally, bidirectionally degrades single-stranded DNA into large acid-insoluble oligonucleotides, which are then degraded further into small acid-soluble oligonucleotides. The protein is Exodeoxyribonuclease 7 small subunit of Mycobacterium avium (strain 104).